The sequence spans 1112 residues: Constitutive coactivator of PPAR-gamma-like protein 1 (1112 aa).

Positions 339–403 (PPHYLARPNP…YSLSEPALTL (65 aa)) are interaction with YES1, SRC and FYN. Residues 372-525 (QAKPAVPQVP…GKGSHMGTVQ (154 aa)) are disordered. 2 stretches are compositionally biased toward polar residues: residues 403–418 (LDTS…SYSN) and 433–445 (SPIN…SPNH). The segment covering 479-500 (GWEKTGSHAEPLARGDPGDQVK) has biased composition (basic and acidic residues). Residues 503–512 (GSSTASSGSQ) show a composition bias toward polar residues. Threonine 653 bears the Phosphothreonine mark. The tract at residues 827-1112 (AEQAAKVEKM…LEAAVLNKEE (286 aa)) is RNA binding. Residues arginine 871, arginine 882, and arginine 884 each carry the omega-N-methylarginine modification. A disordered region spans residues 919 to 943 (AFSGSDSSRTSKSQGGVQPIPSQGG). Polar residues predominate over residues 922–934 (GSDSSRTSKSQGG). N6-acetyllysine is present on lysine 930. Serine 958 is modified (phosphoserine). 2 positions are modified to omega-N-methylarginine: arginine 980 and arginine 984. Phosphoserine occurs at positions 1021 and 1042. A disordered region spans residues 1030 to 1090 (KSKSGESKSS…PCNTNPHLNA (61 aa)). Residues 1070–1090 (HSESALNNDSKPCNTNPHLNA) are compositionally biased toward polar residues.

This sequence belongs to the constitutive coactivator of PPAR-gamma family. Interacts with PURA. Interacts with SRC family protein kinases YES1, SRC and FYN. Upon tyrosine phosphorylation, interacts with PIK3R1. Interacts with IGF2BP1/IMP-1 in an RNA-dependent manner. Post-translationally, arg-980 is dimethylated, probably to asymmetric dimethylarginine. Phosphorylated on tyrosine by src family kinases upon ultraviolet exposure. As to expression, in the brain, predominantly expressed in the hippocampus, caudate putamen, cerebral cortex and cerebellum. Expression is restricted to neurons (at protein level).

It localises to the cytoplasm. The protein localises to the cell membrane. Functionally, component of the oxidative stress-induced survival signaling. May regulate the activation of SRC family protein kinases. May act as a scaffolding protein enabling SRC family protein kinases to phosphorylate and activate PI3-kinase. Binds IGF2 RNA and promotes the production of IGF2 protein. The protein is Constitutive coactivator of PPAR-gamma-like protein 1 (FAM120A) of Mus musculus (Mouse).